The primary structure comprises 407 residues: MTDKAAQAVRLFTSESVTEGHPDKICDAISDAILDALLEEDPDAHVAVETLVTTGQVHVVGEVRTSGYVEIPQIVRKTLVEIGFTSSDVGFDGHTCGVNVAIGEQSQEIGAGVDASTEVRSGTFEDDDQYGAGDQGLMFGYATNETPEFMPLPISTAHHLSRRLTHVRKEGIVPSLRPDGKTQVTFAYDENDVPTRLETIVISTQHDPEVTQEWLAEQLRTHVVEWVVNDADLSQYYTEDTELLINPSGSFILGGPMGDAGLTGRKIIVDTYGGMARHGGGAFSGKDPSKVDRSAAYAMRWVAKNIVAAGLADRAEVQVAYAIGRAKPVGLYVETFGTAHEGLSDADIQAAVNKVFDLRPAAIIRELDLQRPIYRQTAAYGHFGRTDVELPWEDTSRADDLRRAAGL.

Histidine 21 contributes to the ATP binding site. Aspartate 23 serves as a coordination point for Mg(2+). Position 49 (glutamate 49) interacts with K(+). L-methionine-binding residues include glutamate 62 and glutamine 105. Residues 105 to 115 (QSQEIGAGVDA) form a flexible loop region. Residues 179-181 (DGK), aspartate 259, 265-266 (RK), alanine 282, and lysine 286 contribute to the ATP site. Residue aspartate 259 participates in L-methionine binding. Lysine 290 is a binding site for L-methionine.

It belongs to the AdoMet synthase family. In terms of assembly, homotetramer; dimer of dimers. Mg(2+) is required as a cofactor. K(+) serves as cofactor.

The protein localises to the cytoplasm. The catalysed reaction is L-methionine + ATP + H2O = S-adenosyl-L-methionine + phosphate + diphosphate. It functions in the pathway amino-acid biosynthesis; S-adenosyl-L-methionine biosynthesis; S-adenosyl-L-methionine from L-methionine: step 1/1. In terms of biological role, catalyzes the formation of S-adenosylmethionine (AdoMet) from methionine and ATP. The overall synthetic reaction is composed of two sequential steps, AdoMet formation and the subsequent tripolyphosphate hydrolysis which occurs prior to release of AdoMet from the enzyme. This chain is S-adenosylmethionine synthase, found in Corynebacterium aurimucosum (strain ATCC 700975 / DSM 44827 / CIP 107346 / CN-1) (Corynebacterium nigricans).